Consider the following 756-residue polypeptide: MDPVAVHSCHLLQQLREQRIQGLLCDCMLVVRGVCFKAHKNVLAAFSQYFRSLFQNSSSQKNDVFHLDVTNVSGIGQILDFMYTSRLDLNQDNIQVMLDTAQCLQVQNVLNLCHTFLKSAPAAQLPGLPCAGGFSLQSVALDGTCAVSEHYPPPSLQECPVEGPQAKVPAEVNARAPSANFSRPTEVSKPDAAGGSCPELPCKQPNHYYKLRTLYSKQYYKQTACPSQVPATQQPLTRSASTDLAAADSQPPVEGRPAVLETPEHLPSTFVAPPVRNSGNDSEADPLSEPPAKQMRLKKAMHLKKLNFLKSQQSAECTSHPEPDNGLARREESAAKEDAVERAGSQTAEEKGRGELGPESSREEELPGAPASWEDPSQALQPQKQYACELCGKPFKHPSNLELHKRSHTGEKPFECNICGKHFSQAGNLQTHLRRHSGEKPYICEICGKRFAASGDVQRHIIIHSGEKPHLCDTCGRGFSNFSNLKEHKKTHTADKVFTCDECGKSFNMQRKLVKHRVRHTGERPYSCPACGKCFGGSGDLRRHVRTHTGEKPYSCEVCSKCFTRSAVLRRHKRMHGRADARSPVVLGELSRPIEPSDLDRSQSSDSFSQDVSVTLMPVSVKLPVQPVESSVAGFDGHCSGSYCKLRSMLRPPGMSDQDRLSLEPSKLAKPPELQSQPQAYAYSDVEPSAGVEQPQADGMAVSRSSLATLDNHCTEPLGSRAPSVTYRNSEGQFFSSMTLWGLAMKTLQNEHELEQ.

A BTB domain is found at 25 to 91 (CDCMLVVRGV…MYTSRLDLNQ (67 aa)). Disordered stretches follow at residues 176-197 (APSANFSRPTEVSKPDAAGGSC), 226-290 (PSQV…LSEP), and 311-379 (SQQS…PSQA). Residues 226–242 (PSQVPATQQPLTRSAST) are compositionally biased toward polar residues. 2 stretches are compositionally biased toward basic and acidic residues: residues 319–341 (SHPEPDNGLARREESAAKEDAVE) and 348–365 (AEEKGRGELGPESSREEE). 7 C2H2-type zinc fingers span residues 386-408 (YACELCGKPFKHPSNLELHKRSH), 414-436 (FECNICGKHFSQAGNLQTHLRRH), 442-464 (YICEICGKRFAASGDVQRHIIIH), 470-492 (HLCDTCGRGFSNFSNLKEHKKTH), 498-520 (FTCDECGKSFNMQRKLVKHRVRH), 526-548 (YSCPACGKCFGGSGDLRRHVRTH), and 554-576 (YSCEVCSKCFTRSAVLRRHKRMH).

It belongs to the krueppel C2H2-type zinc-finger protein family. Interacts with EP300, KAT5/Tip60 and ZBTB17. The interaction with EP300 is direct and leads to synergistic induction of CDKN1A. On the CDKN1A promoter, forms a complex with ZBTB17; this interaction leads to additive CDKN1A transactivation. The interaction with ZBTB17 may block ZBTB17 repressor activity. As to expression, widely expressed, with highest levels in white adipose tissue and kidney, intermediate levels in brain, liver and heart, and lowest levels in spleen, brown adipose tissue and muscle.

Its subcellular location is the cytoplasm. The protein resides in the nucleus. In terms of biological role, transcription factor. Inhibits cell proliferation by activating either CDKN1A/p21 transcription or RB1 transcription. This is Zinc finger and BTB domain-containing protein 49 (Zbtb49) from Mus musculus (Mouse).